We begin with the raw amino-acid sequence, 369 residues long: Maltose/maltodextrin import ATP-binding protein MalK (369 aa).

In terms of domain architecture, ABC transporter spans 4–234; that stretch reads VTLSSVYKAF…PANRFVAGFI (231 aa). 36 to 43 provides a ligand contact to ATP; sequence GPSGCGKS.

Belongs to the ABC transporter superfamily. Maltooligosaccharide importer (TC 3.A.1.1.1) family. As to quaternary structure, the complex is composed of two ATP-binding proteins (MalK), two transmembrane proteins (MalG and MalK) and a solute-binding protein (MalE).

Its subcellular location is the cell inner membrane. The catalysed reaction is D-maltose(out) + ATP + H2O = D-maltose(in) + ADP + phosphate + H(+). Its function is as follows. Part of the ABC transporter complex MalEFGK involved in maltose/maltodextrin import. Responsible for energy coupling to the transport system. This Yersinia pestis bv. Antiqua (strain Antiqua) protein is Maltose/maltodextrin import ATP-binding protein MalK.